The primary structure comprises 147 residues: Large ribosomal subunit protein uL15 (147 aa).

Residues Met-1–Ala-42 are disordered.

It belongs to the universal ribosomal protein uL15 family. In terms of assembly, part of the 50S ribosomal subunit.

Binds to the 23S rRNA. This chain is Large ribosomal subunit protein uL15, found in Rhodococcus erythropolis (strain PR4 / NBRC 100887).